A 262-amino-acid polypeptide reads, in one-letter code: Histone chaperone cia1 (262 aa).

Residues 157-262 (IQWDNPDFDD…KPEEKPETSQ (106 aa)) are disordered. 2 coiled-coil regions span residues 173–196 (DADEEEEEEEADEMEEEFDEEGEG) and 223–253 (KGSEEEEEEEIDIEEEEEESALANASAAEEK). Acidic residues-rich tracts occupy residues 173–219 (DADE…GEGE) and 226–242 (EEEEEEEIDIEEEEEES). Positions 250 to 262 (AEEKPEEKPETSQ) are enriched in basic and acidic residues.

This sequence belongs to the ASF1 family. As to quaternary structure, interacts with histone H3 and histone H4.

The protein resides in the nucleus. In terms of biological role, histone chaperone that facilitates histone deposition and histone exchange and removal during nucleosome assembly and disassembly. This Schizosaccharomyces pombe (strain 972 / ATCC 24843) (Fission yeast) protein is Histone chaperone cia1 (cia1).